The sequence spans 292 residues: 11-beta-hydroxysteroid dehydrogenase 1 (292 aa).

The Cytoplasmic segment spans residues 2–7; that stretch reads HFMKKY. The helical; Signal-anchor for type II membrane protein transmembrane segment at 8–24 threads the bilayer; sequence LLPILVLFLAYYYYSTK. Over 25 to 292 the chain is Lumenal; sequence EEFRPEMLQG…SFTFDKLISS (268 aa). Residues 41 to 67, 92 to 93, and 119 to 121 contribute to the NADP(+) site; these read GASK…TARS, TM, and NHI. An N-linked (GlcNAc...) asparagine glycan is attached at asparagine 162. Residue serine 170 coordinates substrate. Tyrosine 183 acts as the Proton acceptor in catalysis. 183–187 contacts NADP(+); that stretch reads YSASK. An N-linked (GlcNAc...) asparagine glycan is attached at asparagine 207. Position 218 to 222 (218 to 222) interacts with NADP(+); it reads INTET.

The protein belongs to the short-chain dehydrogenases/reductases (SDR) family. Homodimer. As to expression, detected in adrenal gland, liver, kidney, testis, and at lower levels in brain and lung (at protein level).

It is found in the endoplasmic reticulum membrane. The enzyme catalyses an 11beta-hydroxysteroid + NADP(+) = an 11-oxosteroid + NADPH + H(+). The catalysed reaction is corticosterone + NADP(+) = 11-dehydrocorticosterone + NADPH + H(+). It catalyses the reaction a 7beta-hydroxysteroid + NADP(+) = a 7-oxosteroid + NADPH + H(+). It carries out the reaction 7-oxocholesterol + NADPH + H(+) = 7beta-hydroxycholesterol + NADP(+). The enzyme catalyses 7-oxocholesterol + NADPH + H(+) = 7alpha-hydroxycholesterol + NADP(+). The catalysed reaction is chenodeoxycholate + NADP(+) = 7-oxolithocholate + NADPH + H(+). It catalyses the reaction 7-oxolithocholate + NADPH + H(+) = ursodeoxycholate + NADP(+). It carries out the reaction glycochenodeoxycholate + NADP(+) = 7-oxoglycolithocholate + NADPH + H(+). The enzyme catalyses taurochenodeoxycholate + NADP(+) = 7-oxotaurolithocholate + NADPH + H(+). The catalysed reaction is tauroursodeoxycholate + NADP(+) = 7-oxotaurolithocholate + NADPH + H(+). It catalyses the reaction glycoursodeoxycholate + NADP(+) = 7-oxoglycolithocholate + NADPH + H(+). It carries out the reaction 7-oxopregnenolone + NADPH + H(+) = 7beta-hydroxypregnenolone + NADP(+). The enzyme catalyses 3beta,7alpha-dihydroxyandrost-5-en-17-one + NADP(+) = 3beta-hydroxy-5-androstene-7,17-dione + NADPH + H(+). The catalysed reaction is 3beta-hydroxy-5-androstene-7,17-dione + NADPH + H(+) = 3beta,7beta-dihydroxyandrost-5-en-17-one + NADP(+). It catalyses the reaction 3beta-hydroxy-5alpha-androstane-7,17-dione + NADPH + H(+) = 3beta,7beta-dihydroxy-5alpha-androstan-17-one + NADP(+). The protein operates within steroid metabolism. Functionally, controls the reversible conversion of biologically active glucocorticoids such as 11-dehydrocorticosterone to corticosterone in the presence of NADP(H). Participates in the corticosteroid receptor-mediated anti-inflammatory response, as well as metabolic and homeostatic processes. Bidirectional in vitro, predominantly functions as a reductase in vivo, thereby increasing the concentration of active glucocorticoids. It has broad substrate specificity, besides glucocorticoids, it accepts other steroid and sterol substrates. Interconverts 7-oxo- and 7-hydroxy-neurosteroids such as 7-oxopregnenolone and 7beta-hydroxypregnenolone, 7-oxodehydroepiandrosterone (3beta-hydroxy-5-androstene-7,17-dione) and 7beta-hydroxydehydroepiandrosterone (3beta,7beta-dihydroxyandrost-5-en-17-one), among others. Catalyzes reversibly the conversion of the major dietary oxysterol, 7-ketocholesterol (7-oxocholesterol), into the more polar 7-beta-hydroxycholesterol and 7-alpha-hhydroxycholesterol metabolites. 7-oxocholesterol is one of the most important oxysterols, it participates in several events such as induction of apoptosis, accumulation in atherosclerotic lesions, lipid peroxidation, and induction of foam cell formation. Mediates the 7-oxo reduction of 7-oxolithocholate mainly to chenodeoxycholate, and to a lesser extent to ursodeoxycholate, both in its free form and when conjugated to glycine or taurine, providing a link between glucocorticoid activation and bile acid metabolism. Catalyzes the synthesis of 7-beta-25-dihydroxycholesterol from 7-oxo-25-hydroxycholesterol in vitro, which acts as a ligand for the G-protein-coupled receptor (GPCR) Epstein-Barr virus-induced gene 2 (EBI2) and may thereby regulate immune cell migration. The sequence is that of 11-beta-hydroxysteroid dehydrogenase 1 (HSD11B1) from Mesocricetus auratus (Golden hamster).